The following is a 372-amino-acid chain: Queuine tRNA-ribosyltransferase (372 aa).

The Proton acceptor role is filled by Asp-92. Substrate-binding positions include 92 to 96, Asp-146, Gln-188, and Gly-215; that span reads DSGGY. The tract at residues 246–252 is RNA binding; sequence GIGSLKE. Asp-265 acts as the Nucleophile in catalysis. The RNA binding; important for wobble base 34 recognition stretch occupies residues 270–274; it reads TRLGR. Residues Cys-303, Cys-305, Cys-308, and His-334 each contribute to the Zn(2+) site.

The protein belongs to the queuine tRNA-ribosyltransferase family. In terms of assembly, homodimer. Within each dimer, one monomer is responsible for RNA recognition and catalysis, while the other monomer binds to the replacement base PreQ1. Zn(2+) is required as a cofactor.

It catalyses the reaction 7-aminomethyl-7-carbaguanine + guanosine(34) in tRNA = 7-aminomethyl-7-carbaguanosine(34) in tRNA + guanine. It functions in the pathway tRNA modification; tRNA-queuosine biosynthesis. Catalyzes the base-exchange of a guanine (G) residue with the queuine precursor 7-aminomethyl-7-deazaguanine (PreQ1) at position 34 (anticodon wobble position) in tRNAs with GU(N) anticodons (tRNA-Asp, -Asn, -His and -Tyr). Catalysis occurs through a double-displacement mechanism. The nucleophile active site attacks the C1' of nucleotide 34 to detach the guanine base from the RNA, forming a covalent enzyme-RNA intermediate. The proton acceptor active site deprotonates the incoming PreQ1, allowing a nucleophilic attack on the C1' of the ribose to form the product. After dissociation, two additional enzymatic reactions on the tRNA convert PreQ1 to queuine (Q), resulting in the hypermodified nucleoside queuosine (7-(((4,5-cis-dihydroxy-2-cyclopenten-1-yl)amino)methyl)-7-deazaguanosine). This Prochlorococcus marinus (strain AS9601) protein is Queuine tRNA-ribosyltransferase.